We begin with the raw amino-acid sequence, 547 residues long: Glucose-6-phosphate isomerase (547 aa).

Glu-353 serves as the catalytic Proton donor. Residues His-384 and Lys-512 contribute to the active site.

Belongs to the GPI family.

Its subcellular location is the cytoplasm. It carries out the reaction alpha-D-glucose 6-phosphate = beta-D-fructose 6-phosphate. Its pathway is carbohydrate biosynthesis; gluconeogenesis. It functions in the pathway carbohydrate degradation; glycolysis; D-glyceraldehyde 3-phosphate and glycerone phosphate from D-glucose: step 2/4. Catalyzes the reversible isomerization of glucose-6-phosphate to fructose-6-phosphate. The sequence is that of Glucose-6-phosphate isomerase from Glaesserella parasuis serovar 5 (strain SH0165) (Haemophilus parasuis).